We begin with the raw amino-acid sequence, 203 residues long: Small ribosomal subunit protein uS5 (203 aa).

Residues 51–114 (LEDEVLDITM…ENAKLNVVRI (64 aa)) form the S5 DRBM domain.

It belongs to the universal ribosomal protein uS5 family. Part of the 30S ribosomal subunit. Contacts protein S4.

Its function is as follows. With S4 and S12 plays an important role in translational accuracy. This Methanothrix thermoacetophila (strain DSM 6194 / JCM 14653 / NBRC 101360 / PT) (Methanosaeta thermophila) protein is Small ribosomal subunit protein uS5.